Here is a 408-residue protein sequence, read N- to C-terminus: Dihydrolipoyllysine-residue acetyltransferase component of pyruvate dehydrogenase complex (408 aa).

One can recognise a Lipoyl-binding domain in the interval 2–78 (PIKILMPALS…PVNSLIAVLS (77 aa)). Lys43 is modified (N6-lipoyllysine). The region spanning 128 to 165 (FASPLAKRLAKIGDIRLENVQGSGPHGRIVKQDILSYD) is the Peripheral subunit-binding (PSBD) domain. The active site involves His381.

It belongs to the 2-oxoacid dehydrogenase family. As to quaternary structure, forms a 24-polypeptide structural core with octahedral symmetry. Requires (R)-lipoate as cofactor.

The enzyme catalyses N(6)-[(R)-dihydrolipoyl]-L-lysyl-[protein] + acetyl-CoA = N(6)-[(R)-S(8)-acetyldihydrolipoyl]-L-lysyl-[protein] + CoA. The pyruvate dehydrogenase complex catalyzes the overall conversion of pyruvate to acetyl-CoA and CO(2). It contains multiple copies of three enzymatic components: pyruvate dehydrogenase (E1), dihydrolipoamide acetyltransferase (E2) and lipoamide dehydrogenase (E3). The polypeptide is Dihydrolipoyllysine-residue acetyltransferase component of pyruvate dehydrogenase complex (pdhC) (Rickettsia prowazekii (strain Madrid E)).